The primary structure comprises 679 residues: Stress-70 protein, mitochondrial (679 aa).

A mitochondrion-targeting transit peptide spans 1–46 (MISASRAVAARLVGAAASRGPTAARHQDGWNGLSHEAFRIVSRRDY). The interaction with NFS1 stretch occupies residues 1-432 (MISASRAVAA…IQGGVLAGDV (432 aa)). 2 residues coordinate ADP: Thr-63 and Asn-64. A nucleotide-binding domain (NBD) region spans residues 63 to 431 (TNSCVAVMEG…AIQGGVLAGD (369 aa)). Lys-76 carries the N6-acetyllysine modification. Residue Thr-87 is modified to Phosphothreonine. N6-acetyllysine; alternate is present on residues Lys-135 and Lys-138. Residues Lys-135 and Lys-138 each carry the N6-succinyllysine; alternate modification. Lys-143 carries the post-translational modification N6-acetyllysine. Lys-206 carries the N6-acetyllysine; alternate modification. Lys-206 bears the N6-succinyllysine; alternate mark. Lys-206 is subject to N6-malonyllysine; alternate. An N6-acetyllysine mark is found at Lys-234 and Lys-288. Lys-300 is subject to N6-acetyllysine; alternate. Lys-300 carries the N6-succinyllysine; alternate modification. Residues Glu-313, Lys-316, and Ser-320 each coordinate ADP. Lys-368 is subject to N6-succinyllysine. Residues Gly-388 and Arg-391 each contribute to the ADP site. Lys-394 bears the N6-succinyllysine mark. Ser-408 bears the Phosphoserine mark. The interval 432–441 (VTDVLLLDVT) is interdomain linker. The segment at 432–679 (VTDVLLLDVT…QKEDQKEEKQ (248 aa)) is interaction with FXN and ISCU. The tract at residues 442-679 (PLSLGIETLG…QKEDQKEEKQ (238 aa)) is substrate-binding domain (SBD). Omega-N-methylarginine is present on Arg-513. N6-acetyllysine; alternate is present on residues Lys-567 and Lys-600. An N6-succinyllysine; alternate mark is found at Lys-567 and Lys-600. Lys-610 bears the N6-succinyllysine mark. Lys-612 is subject to N6-acetyllysine. N6-acetyllysine; alternate is present on Lys-646. Lys-646 is modified (N6-succinyllysine; alternate). The segment at 656 to 679 (ASEREGSGSSGTGEQKEDQKEEKQ) is disordered. Basic and acidic residues predominate over residues 669 to 679 (EQKEDQKEEKQ).

The protein belongs to the heat shock protein 70 family. As to quaternary structure, interacts strongly with the intermediate form of FXN and weakly with its mature form. Interacts with HSCB. Associates with the mitochondrial contact site and cristae organizing system (MICOS) complex, composed of at least MICOS10/MIC10, CHCHD3/MIC19, CHCHD6/MIC25, APOOL/MIC27, IMMT/MIC60, APOO/MIC23/MIC26 and QIL1/MIC13. This complex was also known under the names MINOS or MitOS complex. The MICOS complex associates with mitochondrial outer membrane proteins SAMM50, MTX1, MTX2 and DNAJC11, mitochondrial inner membrane protein TMEM11 and with HSPA9. Interacts with DNLZ, the interaction is required to prevent self-aggregation. Interacts with TESPA1. Interacts with PDPN. Interacts with NFU1, NFS1 and ISCU. Interacts with TP53; the interaction promotes TP53 degradation. Interacts (via SBD domain) with UBXN2A; the interaction with UBXN2A inhibits HSPA9/MOT-2 interaction with and degradation of TP53, thereby promotes TP53 translocation to the nucleus. Interacts with ITPR1 AND VDAC1; this interaction couples ITPR1 to VDAC1. Component of the TIM23 mitochondrial inner membrane pre-sequence translocase complex.

Its subcellular location is the mitochondrion. The protein resides in the nucleus. It is found in the nucleolus. The protein localises to the cytoplasm. It localises to the mitochondrion matrix. The enzyme catalyses ATP + H2O = ADP + phosphate + H(+). The chaperone activity is regulated by ATP-induced allosteric coupling of the nucleotide-binding (NBD) and substrate-binding (SBD) domains. ATP binding in the nucleotide-binding pocket (NBP) leads to a conformational change in the NBD, which is transferred through the interdomain linker (IDL) to the substrate-binding domain (SBD). This elicits a reduced substrate affinity and a faster substrate exchange rate. Upon hydrolysis of ATP to ADP, the protein undergoes a conformational change that increases its affinity for substrate proteins. It cycles through repeated phases of ATP hydrolysis and nucleotide exchange, facilitating repeated cycles of substrate binding and release. Functions in collaboration with co-chaperones. Functions with the co-chaperone, DNLZ, to maintain solubility and regulate ATP hydrolysis. Nucleotide exchange factors, GRPEL1 and GRPEL2, accelerate nucleotide exchange. In terms of biological role, mitochondrial chaperone that plays a key role in mitochondrial protein import, folding, and assembly. Plays an essential role in the protein quality control system, the correct folding of proteins, the re-folding of misfolded proteins, and the targeting of proteins for subsequent degradation. These processes are achieved through cycles of ATP binding, ATP hydrolysis, and ADP release, mediated by co-chaperones. In mitochondria, it associates with the TIM (translocase of the inner membrane) protein complex to assist in the import and folding of mitochondrial proteins. Plays an important role in mitochondrial iron-sulfur cluster (ISC) biogenesis, interacts with and stabilizes ISC cluster assembly proteins FXN, NFU1, NFS1 and ISCU. Regulates erythropoiesis via stabilization of ISC assembly. Regulates mitochondrial calcium-dependent apoptosis by coupling two calcium channels, ITPR1 and VDAC1, at the mitochondria-associated endoplasmic reticulum (ER) membrane to facilitate calcium transport from the ER lumen to the mitochondria intermembrane space, providing calcium for the downstream calcium channel MCU, which releases it into the mitochondrial matrix. Although primarily located in the mitochondria, it is also found in other cellular compartments. In the cytosol, it associates with proteins involved in signaling, apoptosis, or senescence. It may play a role in cell cycle regulation via its interaction with and promotion of degradation of TP53. May play a role in the control of cell proliferation and cellular aging. Protects against reactive oxygen species (ROS). Extracellular HSPA9 plays a cytoprotective role by preventing cell lysis following immune attack by the membrane attack complex by disrupting formation of the complex. The protein is Stress-70 protein, mitochondrial of Pongo abelii (Sumatran orangutan).